The following is a 141-amino-acid chain: ATP synthase epsilon chain (141 aa).

It belongs to the ATPase epsilon chain family. F-type ATPases have 2 components, CF(1) - the catalytic core - and CF(0) - the membrane proton channel. CF(1) has five subunits: alpha(3), beta(3), gamma(1), delta(1), epsilon(1). CF(0) has three main subunits: a, b and c.

It is found in the cell inner membrane. Its function is as follows. Produces ATP from ADP in the presence of a proton gradient across the membrane. The polypeptide is ATP synthase epsilon chain (Pseudomonas aeruginosa (strain LESB58)).